The sequence spans 501 residues: ATP synthase subunit alpha (501 aa).

169–176 (GDRQTGKT) contacts ATP.

It belongs to the ATPase alpha/beta chains family. As to quaternary structure, F-type ATPases have 2 components, CF(1) - the catalytic core - and CF(0) - the membrane proton channel. CF(1) has five subunits: alpha(3), beta(3), gamma(1), delta(1), epsilon(1). CF(0) has three main subunits: a(1), b(2) and c(9-12). The alpha and beta chains form an alternating ring which encloses part of the gamma chain. CF(1) is attached to CF(0) by a central stalk formed by the gamma and epsilon chains, while a peripheral stalk is formed by the delta and b chains.

The protein localises to the cell inner membrane. It carries out the reaction ATP + H2O + 4 H(+)(in) = ADP + phosphate + 5 H(+)(out). Its function is as follows. Produces ATP from ADP in the presence of a proton gradient across the membrane. The alpha chain is a regulatory subunit. In Campylobacter jejuni subsp. doylei (strain ATCC BAA-1458 / RM4099 / 269.97), this protein is ATP synthase subunit alpha.